A 387-amino-acid chain; its full sequence is Phosphoglycerate kinase (387 aa).

Substrate-binding positions include 21–23, Arg36, 59–62, Arg113, and Arg146; these read DLN and HLGR. Residues Lys197, Glu314, and 340 to 343 contribute to the ATP site; that span reads GGDT.

It belongs to the phosphoglycerate kinase family. Monomer.

The protein resides in the cytoplasm. It catalyses the reaction (2R)-3-phosphoglycerate + ATP = (2R)-3-phospho-glyceroyl phosphate + ADP. Its pathway is carbohydrate degradation; glycolysis; pyruvate from D-glyceraldehyde 3-phosphate: step 2/5. This Pseudomonas entomophila (strain L48) protein is Phosphoglycerate kinase.